The chain runs to 306 residues: MRRKIALFLALIFVGVSLVSCSSKKEAVSGDVVAVVNGEKITNAEYQQIFEQVKEQIESAPTYTKDIWNQDYQGKKFLDFVKENVLDSLVAQKLLVQEAKKKNITVTDKEVEEEYNKEKQFNSKVTKEQIREYLLIDKLLAEYTKDVKVTDEELKKYYDEHKESFEVMRARHILVADEKTAEDIYQRLMKGEDFAALAKEYSIDTATKDNGGDLGEFPHGVMVPEFEEAAFSLKLGEISKPVKTQYGYHIIKSEGITVKPFDEVKGTIESYLLNDKKNKVIKEKYDELVKASKIQKFPENIKVKVG.

Residues 1-20 (MRRKIALFLALIFVGVSLVS) form the signal peptide. Cysteine 21 carries the N-palmitoyl cysteine lipid modification. The S-diacylglycerol cysteine moiety is linked to residue cysteine 21. The region spanning 165 to 255 (FEVMRARHIL…YGYHIIKSEG (91 aa)) is the PpiC domain.

This sequence belongs to the PrsA family.

The protein resides in the cell membrane. It carries out the reaction [protein]-peptidylproline (omega=180) = [protein]-peptidylproline (omega=0). Plays a major role in protein secretion by helping the post-translocational extracellular folding of several secreted proteins. This chain is Foldase protein PrsA, found in Caldanaerobacter subterraneus subsp. tengcongensis (strain DSM 15242 / JCM 11007 / NBRC 100824 / MB4) (Thermoanaerobacter tengcongensis).